A 534-amino-acid chain; its full sequence is MEEEMQPAEEGPSVPKIYKQRSPYSVLKTFPSKRPALAKRYERPTLVELPHVRAPPPPPPPFAPHAAVSISSSEPPPQQFQAQSSYPPGPGRAAAAASSSSPSCTPATSQGHLRTPAQPPPASPAASSSSSFAAVVRYGPGAAAAAGTGGTGSDSASLELSAESRMILDAFAQQCSRVLSLLNCGGKLLDSNHSQSMISCVKQEGSSYNERQEHCHIGKGVHSQTSDNVDIEMQYMQRKQQTSAFLRVFTDSLQNYLLSGSFPTPNPSSASEYGHLADVDPLSTSPVHTLGGWTSPATSESHGHPSSSTLPEEEEEEDEEGYCPRCQELEQEVISLQQENEELRRKLESIPVPCQTVLDYLKMVLQHHNQLLIPQPADQPTEGSKQLLNNYPVYITSKQWDEAVNSSKKDGRRLLRYLIRFVFTTDELKYSCGLGKRKRSVQSGETGPERRPLDPVKVTCLREFIRMHCTSNPDWWMPSEEQINKVFSDAVGHARQGRAVGTFLHNGGSFYEGIDHQASQDEVFNKSSQDGSGD.

3 disordered regions span residues 1-24, 48-128, and 287-322; these read MEEE…RSPY, ELPH…AASS, and VHTL…EEGY. Pro residues predominate over residues 53-63; that stretch reads RAPPPPPPPFA. The span at 69–83 shows a compositional bias: polar residues; it reads SISSSEPPPQQFQAQ. Residues 91–109 are compositionally biased toward low complexity; the sequence is GRAAAAASSSSPSCTPATS. Polar residues predominate over residues 295 to 310; it reads SPATSESHGHPSSSTL. The segment covering 311–321 has biased composition (acidic residues); that stretch reads PEEEEEEDEEG. Residues 324-351 adopt a coiled-coil conformation; the sequence is PRCQELEQEVISLQQENEELRRKLESIP. A BEN domain is found at 390–498; that stretch reads NYPVYITSKQ…DAVGHARQGR (109 aa).

The protein is BEN domain-containing protein 4 (BEND4) of Homo sapiens (Human).